A 196-amino-acid polypeptide reads, in one-letter code: Holliday junction branch migration complex subunit RuvA (196 aa).

The domain I stretch occupies residues 1–63 (MYDYIKGKLS…DDAHLLFGFH (63 aa)). The domain II stretch occupies residues 64-142 (TENEKEIFLN…EASGESATSR (79 aa)). Residues 143–148 (KVSSEQ) are flexible linker. Residues 148-196 (QNSNLEEAMEALLALGYKATELKKVKAFFEGTNETVEQYIKSSLKMLMK) are domain III.

Belongs to the RuvA family. Homotetramer. Forms an RuvA(8)-RuvB(12)-Holliday junction (HJ) complex. HJ DNA is sandwiched between 2 RuvA tetramers; dsDNA enters through RuvA and exits via RuvB. An RuvB hexamer assembles on each DNA strand where it exits the tetramer. Each RuvB hexamer is contacted by two RuvA subunits (via domain III) on 2 adjacent RuvB subunits; this complex drives branch migration. In the full resolvosome a probable DNA-RuvA(4)-RuvB(12)-RuvC(2) complex forms which resolves the HJ.

It localises to the cytoplasm. In terms of biological role, the RuvA-RuvB-RuvC complex processes Holliday junction (HJ) DNA during genetic recombination and DNA repair, while the RuvA-RuvB complex plays an important role in the rescue of blocked DNA replication forks via replication fork reversal (RFR). RuvA specifically binds to HJ cruciform DNA, conferring on it an open structure. The RuvB hexamer acts as an ATP-dependent pump, pulling dsDNA into and through the RuvAB complex. HJ branch migration allows RuvC to scan DNA until it finds its consensus sequence, where it cleaves and resolves the cruciform DNA. This chain is Holliday junction branch migration complex subunit RuvA, found in Streptococcus agalactiae serotype Ia (strain ATCC 27591 / A909 / CDC SS700).